Consider the following 88-residue polypeptide: Translation initiation factor IF-1 2 (88 aa).

The 72-residue stretch at 1 to 72 (MAKEELIELQ…TKGRINFRHK (72 aa)) folds into the S1-like domain.

The protein belongs to the IF-1 family. As to quaternary structure, component of the 30S ribosomal translation pre-initiation complex which assembles on the 30S ribosome in the order IF-2 and IF-3, IF-1 and N-formylmethionyl-tRNA(fMet); mRNA recruitment can occur at any time during PIC assembly.

The protein resides in the cytoplasm. Functionally, one of the essential components for the initiation of protein synthesis. Stabilizes the binding of IF-2 and IF-3 on the 30S subunit to which N-formylmethionyl-tRNA(fMet) subsequently binds. Helps modulate mRNA selection, yielding the 30S pre-initiation complex (PIC). Upon addition of the 50S ribosomal subunit IF-1, IF-2 and IF-3 are released leaving the mature 70S translation initiation complex. In Bordetella avium (strain 197N), this protein is Translation initiation factor IF-1 2.